Reading from the N-terminus, the 114-residue chain is uncharacterized protein (114 aa).

Disordered stretches follow at residues 26–45 (GMKQ…DALG) and 72–98 (PKGS…SVQA).

This is an uncharacterized protein from Homo sapiens (Human).